The following is a 359-amino-acid chain: Peptide chain release factor 1 (359 aa).

Gln236 carries the N5-methylglutamine modification.

This sequence belongs to the prokaryotic/mitochondrial release factor family. Post-translationally, methylated by PrmC. Methylation increases the termination efficiency of RF1.

Its subcellular location is the cytoplasm. Its function is as follows. Peptide chain release factor 1 directs the termination of translation in response to the peptide chain termination codons UAG and UAA. The chain is Peptide chain release factor 1 from Streptococcus agalactiae serotype Ia (strain ATCC 27591 / A909 / CDC SS700).